The following is a 400-amino-acid chain: tRNA(Ile)-lysidine synthase (400 aa).

S25–S30 contributes to the ATP binding site.

The protein belongs to the tRNA(Ile)-lysidine synthase family.

The protein localises to the cytoplasm. It carries out the reaction cytidine(34) in tRNA(Ile2) + L-lysine + ATP = lysidine(34) in tRNA(Ile2) + AMP + diphosphate + H(+). Ligates lysine onto the cytidine present at position 34 of the AUA codon-specific tRNA(Ile) that contains the anticodon CAU, in an ATP-dependent manner. Cytidine is converted to lysidine, thus changing the amino acid specificity of the tRNA from methionine to isoleucine. The sequence is that of tRNA(Ile)-lysidine synthase from Francisella philomiragia subsp. philomiragia (strain ATCC 25017 / CCUG 19701 / FSC 153 / O#319-036).